A 55-amino-acid chain; its full sequence is Large ribosomal subunit protein bL33 (55 aa).

Belongs to the bacterial ribosomal protein bL33 family.

In Baumannia cicadellinicola subsp. Homalodisca coagulata, this protein is Large ribosomal subunit protein bL33.